The sequence spans 380 residues: Selenoprotein P (380 aa).

A signal peptide spans 1–19; that stretch reads MWRSLGLALALCLLPYGGA. Residue selenocysteine 59 is a non-standard amino acid, selenocysteine. N-linked (GlcNAc...) asparagine glycosylation is found at asparagine 83, asparagine 176, and asparagine 195. Positions 196 to 257 are disordered; it reads KTAEPSEAHS…RGQHRQGHLE (62 aa). Positions 221 to 237 are enriched in polar residues; it reads SKPSENQQPGPSETTLP. Residues 241–253 show a composition bias toward basic residues; it reads LHHHHRHRGQHRQ. Residue selenocysteine 259 is a non-standard amino acid, selenocysteine. Position 264 is a phosphoserine (serine 264). Non-standard amino acids (selenocysteine) are located at selenocysteine 277, selenocysteine 318, selenocysteine 330, and selenocysteine 352. The disordered stretch occupies residues 346–380; sequence RSPPAAUQNQPMNPMEANPNUSUDNQTRKUKUHSN. The segment covering 348–360 has biased composition (low complexity); the sequence is PPAAUQNQPMNPM. Residue asparagine 365 is glycosylated (N-linked (GlcNAc...) asparagine). Residues selenocysteine 366 and selenocysteine 368 are each a non-standard amino acid (selenocysteine). Asparagine 370 carries an N-linked (GlcNAc...) asparagine glycan. Residues selenocysteine 375 and selenocysteine 377 are each a non-standard amino acid (selenocysteine).

This sequence belongs to the selenoprotein P family. Phosphorylation sites are present in the extracellular medium. In the kidney, expressed in the cortex with no expression observed in the medulla (at protein level). Expressed by the liver and secreted in plasma.

The protein resides in the secreted. Its function is as follows. Might be responsible for some of the extracellular antioxidant defense properties of selenium or might be involved in the transport of selenium. May supply selenium to tissues such as brain and testis. In Mus musculus (Mouse), this protein is Selenoprotein P.